The primary structure comprises 270 residues: MAPKVFYISDGTAITAEVFGHAVLSQFPLEFESLTIPFVETLTKAEQVKRQINDCFITTGERPLVFHSIVKAEIRDIIYSSEGLDYDFLNTFVAPLEQHLGVSASPVLHRTHGKANHGYEARIDAINFAMDNDDGQTMKHMDQADLVLLGVSRCGKTPSSLYLSMQFGIKAANYPFTEDDMDNLKLPDALKRNKKKLFGLTIDPVRLHEIRQSRMENSRYSSLKQCRLEVKEVEMLFKRERIPYIDTTNHSVEEIATKILDVTGLERHMF.

Residue 150–157 coordinates ADP; that stretch reads GVSRCGKT.

The protein belongs to the pyruvate, phosphate/water dikinase regulatory protein family. PSRP subfamily.

It carries out the reaction [pyruvate, water dikinase] + ADP = [pyruvate, water dikinase]-phosphate + AMP + H(+). It catalyses the reaction [pyruvate, water dikinase]-phosphate + phosphate + H(+) = [pyruvate, water dikinase] + diphosphate. Bifunctional serine/threonine kinase and phosphorylase involved in the regulation of the phosphoenolpyruvate synthase (PEPS) by catalyzing its phosphorylation/dephosphorylation. This Shewanella baltica (strain OS223) protein is Putative phosphoenolpyruvate synthase regulatory protein.